Reading from the N-terminus, the 337-residue chain is Anthranilate phosphoribosyltransferase (337 aa).

5-phospho-alpha-D-ribose 1-diphosphate is bound by residues glycine 78, 81-82, threonine 86, 88-91, 106-114, and serine 118; these read GD, NIST, and KHGNRSVSS. Glycine 78 contacts anthranilate. A Mg(2+)-binding site is contributed by serine 90. Asparagine 109 serves as a coordination point for anthranilate. Arginine 164 provides a ligand contact to anthranilate. Mg(2+) is bound by residues aspartate 222 and glutamate 223.

This sequence belongs to the anthranilate phosphoribosyltransferase family. In terms of assembly, homodimer. Requires Mg(2+) as cofactor.

The catalysed reaction is N-(5-phospho-beta-D-ribosyl)anthranilate + diphosphate = 5-phospho-alpha-D-ribose 1-diphosphate + anthranilate. Its pathway is amino-acid biosynthesis; L-tryptophan biosynthesis; L-tryptophan from chorismate: step 2/5. Its function is as follows. Catalyzes the transfer of the phosphoribosyl group of 5-phosphorylribose-1-pyrophosphate (PRPP) to anthranilate to yield N-(5'-phosphoribosyl)-anthranilate (PRA). The chain is Anthranilate phosphoribosyltransferase from Idiomarina loihiensis (strain ATCC BAA-735 / DSM 15497 / L2-TR).